Here is a 3184-residue protein sequence, read N- to C-terminus: Probable serine/threonine-protein kinase pats1 (3184 aa).

A compositionally biased stretch (pro residues) spans 369-378 (DPPPPPPSNS). Disordered stretches follow at residues 369 to 516 (DPPP…QIPP) and 913 to 1013 (SITR…TSIL). Positions 379–415 (SPPISKSTSNNNLNVSNYHNNNNNNNNSNSNLSNSGN) are enriched in low complexity. Over residues 421-450 (DFQSQNLVKSYNRENSGNSLNSMLHQTSLP) the composition is skewed to polar residues. Residues 451–512 (NNNNSNVVNN…NNNNSNNNNS (62 aa)) show a composition bias toward low complexity. One can recognise a Myotubularin phosphatase domain in the interval 842 to 1348 (CFPDHSLLQE…FQDTMWNEYF (507 aa)). The segment covering 913 to 934 (SITRATSPEDQNNGSSNYLLTP) has biased composition (polar residues). A compositionally biased stretch (low complexity) spans 935-993 (NSPNSSSSNLANNNNSNNNNINNNNNNNNNNNNNNNNNSNNNNNNNNNNNNNNNNNNNN). Polar residues predominate over residues 1000-1013 (SRSTTIDNGQTSIL). LRR repeat units follow at residues 1391 to 1412 (FLET…STLY), 1416 to 1438 (GLRE…SSLV), 1439 to 1460 (KLEK…TVVL), 1467 to 1488 (SLTE…FSMF), 1491 to 1512 (SLKK…LGML), 1514 to 1535 (NLIE…GVGI), 1541 to 1563 (KLCI…GDLK), 1564 to 1585 (SLEK…FRQL), 1587 to 1608 (NLEE…VCFL), 1610 to 1631 (NLKK…ISQL), 1633 to 1654 (KLMI…IGQL), 1656 to 1678 (QLVS…MGLL), and 1680 to 1701 (NLVE…IVSL). One can recognise a Roc domain in the interval 1716 to 1910 (GQEQCYKMKL…EKLEALVQSQ (195 aa)). Residues 1716–1910 (GQEQCYKMKL…EKLEALVQSQ (195 aa)) form a small GTPase-like region. Residues 1729 to 1736 (GQENVGKT), 1797 to 1801 (DFAGQ), and 1854 to 1857 (THLD) each bind GTP. Residues 1918–2127 (PRSYMLLENL…KCYWKNGMIL (210 aa)) form the COR domain. The Protein kinase domain occupies 2247 to 2519 (LMIEELIGEG…RLIKIAEAMF (273 aa)). Residues 2253–2261 (IGEGGAALV) and Lys-2274 contribute to the ATP site. Asp-2379 acts as the Proton acceptor in catalysis. Disordered regions lie at residues 2528–2609 (YQQQ…TISH) and 2652–2671 (NSIN…NSLL). Positions 2529-2555 (QQQQQQQQQQQQSSPSKSSSTSPIIKS) are enriched in low complexity. Over residues 2556 to 2576 (LNLSTVSELGESSNQTPKQNI) the composition is skewed to polar residues. WD repeat units lie at residues 2745–2785 (PNQG…KYIQ), 2790–2829 (ANKD…KIKS), 2909–2947 (AHER…HTIE), 2949–2986 (AHSS…LVSE), and 2990–3040 (KHKD…NSRS). Positions 3055–3126 (GSSNSITNSN…NYYYSNNVNS (72 aa)) are enriched in low complexity. The interval 3055 to 3164 (GSSNSITNSN…TPPGSKGLMQ (110 aa)) is disordered. Positions 3141–3157 (HEQTSPNSATPLSSTPP) are enriched in polar residues.

Belongs to the protein kinase superfamily. TKL Ser/Thr protein kinase family. ROCO subfamily.

The enzyme catalyses L-seryl-[protein] + ATP = O-phospho-L-seryl-[protein] + ADP + H(+). The catalysed reaction is L-threonyl-[protein] + ATP = O-phospho-L-threonyl-[protein] + ADP + H(+). May act as a serine/threonine-protein kinase and guanine-nucleotide releasing factor. Essential regulator of cytokinesis involved in the binding to actomyosin cytoskeleton. The protein is Probable serine/threonine-protein kinase pats1 (pats1) of Dictyostelium discoideum (Social amoeba).